The sequence spans 417 residues: NADH-quinone oxidoreductase subunit D (417 aa).

It belongs to the complex I 49 kDa subunit family. In terms of assembly, NDH-1 is composed of 14 different subunits. Subunits NuoB, C, D, E, F, and G constitute the peripheral sector of the complex.

Its subcellular location is the cell inner membrane. It catalyses the reaction a quinone + NADH + 5 H(+)(in) = a quinol + NAD(+) + 4 H(+)(out). NDH-1 shuttles electrons from NADH, via FMN and iron-sulfur (Fe-S) centers, to quinones in the respiratory chain. The immediate electron acceptor for the enzyme in this species is believed to be ubiquinone. Couples the redox reaction to proton translocation (for every two electrons transferred, four hydrogen ions are translocated across the cytoplasmic membrane), and thus conserves the redox energy in a proton gradient. The sequence is that of NADH-quinone oxidoreductase subunit D from Chromobacterium violaceum (strain ATCC 12472 / DSM 30191 / JCM 1249 / CCUG 213 / NBRC 12614 / NCIMB 9131 / NCTC 9757 / MK).